Reading from the N-terminus, the 331-residue chain is 6-phosphogluconolactonase (331 aa).

It belongs to the cycloisomerase 2 family.

The enzyme catalyses 6-phospho-D-glucono-1,5-lactone + H2O = 6-phospho-D-gluconate + H(+). The protein operates within carbohydrate degradation; pentose phosphate pathway; D-ribulose 5-phosphate from D-glucose 6-phosphate (oxidative stage): step 2/3. Its function is as follows. Catalyzes the hydrolysis of 6-phosphogluconolactone to 6-phosphogluconate. This chain is 6-phosphogluconolactonase, found in Serratia proteamaculans (strain 568).